Reading from the N-terminus, the 441-residue chain is Tol-Pal system protein TolB (441 aa).

Residues 1–39 form the signal peptide; sequence MPTMTPAFSRASLSEALRSYGLALLLFLATLLAWQPAHA.

The protein belongs to the TolB family. As to quaternary structure, the Tol-Pal system is composed of five core proteins: the inner membrane proteins TolA, TolQ and TolR, the periplasmic protein TolB and the outer membrane protein Pal. They form a network linking the inner and outer membranes and the peptidoglycan layer.

The protein resides in the periplasm. Part of the Tol-Pal system, which plays a role in outer membrane invagination during cell division and is important for maintaining outer membrane integrity. In Bordetella avium (strain 197N), this protein is Tol-Pal system protein TolB.